Reading from the N-terminus, the 219-residue chain is Elongation factor Ts (219 aa).

The involved in Mg(2+) ion dislocation from EF-Tu stretch occupies residues 82–85; sequence TDFV.

Belongs to the EF-Ts family.

The protein localises to the cytoplasm. Its function is as follows. Associates with the EF-Tu.GDP complex and induces the exchange of GDP to GTP. It remains bound to the aminoacyl-tRNA.EF-Tu.GTP complex up to the GTP hydrolysis stage on the ribosome. The polypeptide is Elongation factor Ts (Anaeromyxobacter sp. (strain K)).